We begin with the raw amino-acid sequence, 335 residues long: Dihydroorotate dehydrogenase (quinone) (335 aa).

FMN contacts are provided by residues 59–63 and Thr-83; that span reads AGLDK. Lys-63 contacts substrate. 108–112 is a substrate binding site; it reads NRMGF. FMN-binding residues include Asn-136 and Asn-169. Asn-169 serves as a coordination point for substrate. The active-site Nucleophile is the Ser-172. Asn-174 contributes to the substrate binding site. FMN-binding residues include Lys-214 and Thr-242. 243 to 244 provides a ligand contact to substrate; the sequence is NT. FMN is bound by residues Gly-265, Gly-294, and 315-316; that span reads YS.

It belongs to the dihydroorotate dehydrogenase family. Type 2 subfamily. Monomer. The cofactor is FMN.

It localises to the cell membrane. The catalysed reaction is (S)-dihydroorotate + a quinone = orotate + a quinol. Its pathway is pyrimidine metabolism; UMP biosynthesis via de novo pathway; orotate from (S)-dihydroorotate (quinone route): step 1/1. In terms of biological role, catalyzes the conversion of dihydroorotate to orotate with quinone as electron acceptor. The polypeptide is Dihydroorotate dehydrogenase (quinone) (Neisseria gonorrhoeae (strain ATCC 700825 / FA 1090)).